Consider the following 139-residue polypeptide: Pre-hexon-linking protein VIII (139 aa).

Residues 35 to 69 (GAAGDYFKSPTSARTLIPLTASCLRPDGVFQLGGG) constitute a propeptide that is removed on maturation.

It belongs to the adenoviridae hexon-linking protein family. As to quaternary structure, interacts with the peripentonal hexons as well as the hexons in the facets. Part of a complex composed of the core-capsid bridging protein, the endosome lysis protein VI and the hexon-linking protein VIII; these interactions bridge the virus core to the capsid. In terms of processing, cleaved by the viral protease during virion maturation. May cause the middle segment to be shed from the capsid.

It is found in the host nucleus. The protein localises to the virion. Its function is as follows. Structural component of the virion that acts as a cement protein on the capsid interior and which glue the peripentonal hexons and group-of-nine hexons together. The chain is Pre-hexon-linking protein VIII from Bovine adenovirus B serotype 3 (BAdV-3).